The following is a 230-amino-acid chain: Large ribosomal subunit protein uL1 (230 aa).

This sequence belongs to the universal ribosomal protein uL1 family. In terms of assembly, part of the 50S ribosomal subunit.

Binds directly to 23S rRNA. The L1 stalk is quite mobile in the ribosome, and is involved in E site tRNA release. Its function is as follows. Protein L1 is also a translational repressor protein, it controls the translation of the L11 operon by binding to its mRNA. The protein is Large ribosomal subunit protein uL1 of Limosilactobacillus reuteri subsp. reuteri (strain JCM 1112) (Lactobacillus reuteri).